The primary structure comprises 938 residues: Isoleucine--tRNA ligase (938 aa).

The 'HIGH' region signature appears at proline 58–histidine 68. The residue at position 183 (lysine 183) is an N6-acetyllysine. Residue glutamate 561 coordinates L-isoleucyl-5'-AMP. The short motif at lysine 602–serine 606 is the 'KMSKS' region element. Lysine 605 contributes to the ATP binding site. Positions 901, 904, 921, and 924 each coordinate Zn(2+).

This sequence belongs to the class-I aminoacyl-tRNA synthetase family. IleS type 1 subfamily. In terms of assembly, monomer. It depends on Zn(2+) as a cofactor.

The protein localises to the cytoplasm. The enzyme catalyses tRNA(Ile) + L-isoleucine + ATP = L-isoleucyl-tRNA(Ile) + AMP + diphosphate. Catalyzes the attachment of isoleucine to tRNA(Ile). As IleRS can inadvertently accommodate and process structurally similar amino acids such as valine, to avoid such errors it has two additional distinct tRNA(Ile)-dependent editing activities. One activity is designated as 'pretransfer' editing and involves the hydrolysis of activated Val-AMP. The other activity is designated 'posttransfer' editing and involves deacylation of mischarged Val-tRNA(Ile). This Escherichia coli O6:H1 (strain CFT073 / ATCC 700928 / UPEC) protein is Isoleucine--tRNA ligase.